The chain runs to 1086 residues: Endo-1,4-beta-xylanase C (1086 aa).

The signal sequence occupies residues 1–31 (MRGKWLRLCLAAVLIVSLLPGLGAGEWKASA). 2 consecutive CBM-cenC domains span residues 35–183 (GDIL…IRLV) and 197–359 (GQAL…ITAT). In terms of domain architecture, GH10 spans 365-710 (EKNIPDLAKK…KPAYWALVDP (346 aa)). Glu502 serves as the catalytic Proton donor. Asp556 is an active-site residue. Glu620 acts as the Nucleophile in catalysis.

Belongs to the glycosyl hydrolase 10 (cellulase F) family.

It carries out the reaction Endohydrolysis of (1-&gt;4)-beta-D-xylosidic linkages in xylans.. Its pathway is glycan degradation; xylan degradation. In terms of biological role, endoxylanase with high hydrolytic activity on birchwood and oat spelt xylan. Xylotetraose, xylotriose, xylobiose and xylose are the main products from birchwood xylan hydrolysis. Shows increasing activity on xylo-oligosaccharides of increasing length. Displays very low hydrolytic activity on Avicel, carboxymethylcellulose (CMC) and p-nitrophenyl-beta-xylopyranoside. Also shows transxylosidase activity, allowing the formation of xylo-oligosaccharides of higher degree of polymerization than the starting substrate. The protein is Endo-1,4-beta-xylanase C (xynC) of Paenibacillus barcinonensis.